The sequence spans 367 residues: Cobalt-precorrin-5B C(1)-methyltransferase (367 aa).

It belongs to the CbiD family.

The enzyme catalyses Co-precorrin-5B + S-adenosyl-L-methionine = Co-precorrin-6A + S-adenosyl-L-homocysteine. Its pathway is cofactor biosynthesis; adenosylcobalamin biosynthesis; cob(II)yrinate a,c-diamide from sirohydrochlorin (anaerobic route): step 6/10. Functionally, catalyzes the methylation of C-1 in cobalt-precorrin-5B to form cobalt-precorrin-6A. The chain is Cobalt-precorrin-5B C(1)-methyltransferase from Priestia megaterium (Bacillus megaterium).